We begin with the raw amino-acid sequence, 109 residues long: ATP-dependent Clp protease adapter protein ClpS (109 aa).

Residues 1–25 (MSERKEGDSGAGVRSAVITQTKPKT) are disordered.

Belongs to the ClpS family. As to quaternary structure, binds to the N-terminal domain of the chaperone ClpA.

In terms of biological role, involved in the modulation of the specificity of the ClpAP-mediated ATP-dependent protein degradation. This is ATP-dependent Clp protease adapter protein ClpS from Phenylobacterium zucineum (strain HLK1).